Reading from the N-terminus, the 132-residue chain is Ribonuclease P protein component (132 aa).

This sequence belongs to the RnpA family. As to quaternary structure, consists of a catalytic RNA component (M1 or rnpB) and a protein subunit.

It carries out the reaction Endonucleolytic cleavage of RNA, removing 5'-extranucleotides from tRNA precursor.. Functionally, RNaseP catalyzes the removal of the 5'-leader sequence from pre-tRNA to produce the mature 5'-terminus. It can also cleave other RNA substrates such as 4.5S RNA. The protein component plays an auxiliary but essential role in vivo by binding to the 5'-leader sequence and broadening the substrate specificity of the ribozyme. The sequence is that of Ribonuclease P protein component from Micrococcus luteus (strain ATCC 4698 / DSM 20030 / JCM 1464 / CCM 169 / CCUG 5858 / IAM 1056 / NBRC 3333 / NCIMB 9278 / NCTC 2665 / VKM Ac-2230) (Micrococcus lysodeikticus).